We begin with the raw amino-acid sequence, 352 residues long: MSGTDKVRVNVSQTAQTPLHTSAKLPKVGVLLVNLGTPDGTSYGPMRRYLAEFLSDRRVIEWSRLIWYPILYGIVLNTRPRRSGRLYDRIWNHENNESPLRTYTRAQGEKLAKALSDQPNVVVDWAMRYGQPSIESITDRLLQQGCERIVIFPLYPQYSATTTATVNDKFFEALMKKRFMPAIRTVPSYEAEPVYIDALARSVEKHLATLSFKPEVILTSYHGIPKSYSDKGDPYRQQCLETTRLLRERLGLGEDEMRATFQSRFGPEEWLQPYTDETVKELAKNGVKSVAVLNPGFVADCLETVDEIGNEAAEEFLENGGENFSHIPCLNDSEEGMKVIETLVRRELLGWV.

Fe cation contacts are provided by H222 and E303.

Belongs to the ferrochelatase family.

It is found in the cytoplasm. The enzyme catalyses heme b + 2 H(+) = protoporphyrin IX + Fe(2+). It functions in the pathway porphyrin-containing compound metabolism; protoheme biosynthesis; protoheme from protoporphyrin-IX: step 1/1. Its function is as follows. Catalyzes the ferrous insertion into protoporphyrin IX. The polypeptide is Ferrochelatase (Brucella melitensis biotype 2 (strain ATCC 23457)).